A 212-amino-acid polypeptide reads, in one-letter code: Large ribosomal subunit protein uL3 (212 aa).

The residue at position 153 (Gln-153) is an N5-methylglutamine.

The protein belongs to the universal ribosomal protein uL3 family. Part of the 50S ribosomal subunit. Forms a cluster with proteins L14 and L19. Methylated by PrmB.

One of the primary rRNA binding proteins, it binds directly near the 3'-end of the 23S rRNA, where it nucleates assembly of the 50S subunit. In Shewanella sediminis (strain HAW-EB3), this protein is Large ribosomal subunit protein uL3.